The sequence spans 371 residues: UDP-N-acetylglucosamine--N-acetylmuramyl-(pentapeptide) pyrophosphoryl-undecaprenol N-acetylglucosamine transferase (371 aa).

UDP-N-acetyl-alpha-D-glucosamine is bound by residues 10–12 (TGG), Asn124, Arg166, Ser196, and Gln301.

The protein belongs to the glycosyltransferase 28 family. MurG subfamily.

It localises to the cell membrane. It carries out the reaction di-trans,octa-cis-undecaprenyl diphospho-N-acetyl-alpha-D-muramoyl-L-alanyl-D-glutamyl-meso-2,6-diaminopimeloyl-D-alanyl-D-alanine + UDP-N-acetyl-alpha-D-glucosamine = di-trans,octa-cis-undecaprenyl diphospho-[N-acetyl-alpha-D-glucosaminyl-(1-&gt;4)]-N-acetyl-alpha-D-muramoyl-L-alanyl-D-glutamyl-meso-2,6-diaminopimeloyl-D-alanyl-D-alanine + UDP + H(+). Its pathway is cell wall biogenesis; peptidoglycan biosynthesis. In terms of biological role, cell wall formation. Catalyzes the transfer of a GlcNAc subunit on undecaprenyl-pyrophosphoryl-MurNAc-pentapeptide (lipid intermediate I) to form undecaprenyl-pyrophosphoryl-MurNAc-(pentapeptide)GlcNAc (lipid intermediate II). The chain is UDP-N-acetylglucosamine--N-acetylmuramyl-(pentapeptide) pyrophosphoryl-undecaprenol N-acetylglucosamine transferase from Moorella thermoacetica (strain ATCC 39073 / JCM 9320).